The following is a 662-amino-acid chain: Fructose-1,6-bisphosphatase class 3 (662 aa).

The protein belongs to the FBPase class 3 family. The cofactor is Mn(2+).

The catalysed reaction is beta-D-fructose 1,6-bisphosphate + H2O = beta-D-fructose 6-phosphate + phosphate. It functions in the pathway carbohydrate biosynthesis; gluconeogenesis. The polypeptide is Fructose-1,6-bisphosphatase class 3 (Clostridium tetani (strain Massachusetts / E88)).